Consider the following 917-residue polypeptide: Alanine--tRNA ligase (917 aa).

His-592, His-596, Cys-694, and His-698 together coordinate Zn(2+).

The protein belongs to the class-II aminoacyl-tRNA synthetase family. The cofactor is Zn(2+).

The protein localises to the cytoplasm. The enzyme catalyses tRNA(Ala) + L-alanine + ATP = L-alanyl-tRNA(Ala) + AMP + diphosphate. Functionally, catalyzes the attachment of alanine to tRNA(Ala) in a two-step reaction: alanine is first activated by ATP to form Ala-AMP and then transferred to the acceptor end of tRNA(Ala). Also edits incorrectly charged Ser-tRNA(Ala) and Gly-tRNA(Ala) via its editing domain. The protein is Alanine--tRNA ligase of Sorangium cellulosum (strain So ce56) (Polyangium cellulosum (strain So ce56)).